Consider the following 370-residue polypeptide: UDP-N-acetylglucosamine--N-acetylmuramyl-(pentapeptide) pyrophosphoryl-undecaprenol N-acetylglucosamine transferase (370 aa).

UDP-N-acetyl-alpha-D-glucosamine is bound by residues 15-17 (TGG), N129, R171, S200, I256, and Q301.

Belongs to the glycosyltransferase 28 family. MurG subfamily.

The protein localises to the cell membrane. The catalysed reaction is di-trans,octa-cis-undecaprenyl diphospho-N-acetyl-alpha-D-muramoyl-L-alanyl-D-glutamyl-meso-2,6-diaminopimeloyl-D-alanyl-D-alanine + UDP-N-acetyl-alpha-D-glucosamine = di-trans,octa-cis-undecaprenyl diphospho-[N-acetyl-alpha-D-glucosaminyl-(1-&gt;4)]-N-acetyl-alpha-D-muramoyl-L-alanyl-D-glutamyl-meso-2,6-diaminopimeloyl-D-alanyl-D-alanine + UDP + H(+). It participates in cell wall biogenesis; peptidoglycan biosynthesis. Functionally, cell wall formation. Catalyzes the transfer of a GlcNAc subunit on undecaprenyl-pyrophosphoryl-MurNAc-pentapeptide (lipid intermediate I) to form undecaprenyl-pyrophosphoryl-MurNAc-(pentapeptide)GlcNAc (lipid intermediate II). The sequence is that of UDP-N-acetylglucosamine--N-acetylmuramyl-(pentapeptide) pyrophosphoryl-undecaprenol N-acetylglucosamine transferase from Caldicellulosiruptor saccharolyticus (strain ATCC 43494 / DSM 8903 / Tp8T 6331).